Here is a 612-residue protein sequence, read N- to C-terminus: MIQVLLVTICLAVFPYQGSSIILGSGNVNDYEVVYPRKVTALPKGAAQPKYEDTMQYEFKVNGEPVVLHLEKNKGLFSEDYSETHYSPDGREITTYPPVEDHCYYHGRIQNDADSTASISACNGLKGHFKLQGEMYLIEPLELSDSEAHAVFKYENVEKEDEAPKMCGVTQNWESYEPIKKASQLNLTPEQQRYLNTKKYIELVIVADNVMVKKYTSNSTAIRTRIYACVNTLNLIYRAFNIHIALVGIEIWSNKDLINVISASNVTLDLFGNWRRRVLLRRKRHDNAQLLTAIDLDGPTIGLARVGSMCDPKCSTGIVQDHSKLDVMVAVTMAHELAHNLGINHDGNQCNCGGNPCIMSATLNFEPAYRFSDCSRDEHWRYLIDNRPPCILNKPLITDIVSPPVCGNYFVEVGEECDCGLPAHCQNPCCNAATCKLRPGTQCEDGECCEQCQFTSAGTECRAAKSECDIAESCTGQSADCPTDNFQRNGRPCLNNNGYCYNGKCPTLDHQCISFFGSSATVAPDVCFNLNLKGEGNFYCRRENTRIFPCAPQDKKCGRLFCVLGPTGNTISCQATSSQSNVDIGMVDLGTKCGDGRVCNSNRQCVDVNTAY.

Residues 1 to 20 (MIQVLLVTICLAVFPYQGSS) form the signal peptide. A propeptide spanning residues 21 to 189 (IILGSGNVND…KKASQLNLTP (169 aa)) is cleaved from the precursor. The Peptidase M12B domain maps to 199 to 395 (KYIELVIVAD…NRPPCILNKP (197 aa)). E202 lines the Ca(2+) pocket. N218 carries an N-linked (GlcNAc...) asparagine glycan. D286 provides a ligand contact to Ca(2+). Intrachain disulfides connect C310–C390, C350–C374, and C352–C357. H335 contacts Zn(2+). E336 is an active-site residue. Zn(2+) contacts are provided by H339 and H345. C390, N393, V405, N408, F410, E412, E415, and D418 together coordinate Ca(2+). Residues 403-489 (PPVCGNYFVE…DCPTDNFQRN (87 aa)) form the Disintegrin domain. 14 cysteine pairs are disulfide-bonded: C406–C435, C417–C430, C419–C425, C429–C452, C443–C449, C448–C474, C461–C481, C468–C500, C493–C505, C512–C562, C527–C573, C540–C550, C557–C599, and C593–C605. Positions 467–469 (ECD) match the D/ECD-tripeptide motif.

It belongs to the venom metalloproteinase (M12B) family. P-III subfamily. It depends on Zn(2+) as a cofactor. In terms of tissue distribution, expressed by the venom gland.

The protein localises to the secreted. Functionally, snake venom metalloproteinase that impairs hemostasis in the envenomed animal. This is Zinc metalloproteinase-disintegrin-like 2d from Crotalus adamanteus (Eastern diamondback rattlesnake).